Reading from the N-terminus, the 82-residue chain is Probable [Fe-S]-dependent transcriptional repressor (82 aa).

Positions 56, 61, 64, and 71 each coordinate iron-sulfur cluster.

The protein belongs to the FeoC family.

Functionally, may function as a transcriptional regulator that controls feoABC expression. The sequence is that of Probable [Fe-S]-dependent transcriptional repressor from Yersinia enterocolitica serotype O:8 / biotype 1B (strain NCTC 13174 / 8081).